Reading from the N-terminus, the 218-residue chain is Peptide methionine sulfoxide reductase MsrA (218 aa).

The active site involves Cys-57.

Belongs to the MsrA Met sulfoxide reductase family.

The catalysed reaction is L-methionyl-[protein] + [thioredoxin]-disulfide + H2O = L-methionyl-(S)-S-oxide-[protein] + [thioredoxin]-dithiol. The enzyme catalyses [thioredoxin]-disulfide + L-methionine + H2O = L-methionine (S)-S-oxide + [thioredoxin]-dithiol. Its function is as follows. Has an important function as a repair enzyme for proteins that have been inactivated by oxidation. Catalyzes the reversible oxidation-reduction of methionine sulfoxide in proteins to methionine. In Brucella melitensis biotype 1 (strain ATCC 23456 / CCUG 17765 / NCTC 10094 / 16M), this protein is Peptide methionine sulfoxide reductase MsrA.